Here is a 196-residue protein sequence, read N- to C-terminus: Pyridoxal 5'-phosphate synthase subunit PdxT (196 aa).

Residue 47–49 coordinates L-glutamine; that stretch reads GES. The Nucleophile role is filled by C79. L-glutamine-binding positions include R106 and 134 to 135; that span reads IR. Residues H170 and E172 each act as charge relay system in the active site.

The protein belongs to the glutaminase PdxT/SNO family. In the presence of PdxS, forms a dodecamer of heterodimers. Only shows activity in the heterodimer.

The catalysed reaction is aldehydo-D-ribose 5-phosphate + D-glyceraldehyde 3-phosphate + L-glutamine = pyridoxal 5'-phosphate + L-glutamate + phosphate + 3 H2O + H(+). The enzyme catalyses L-glutamine + H2O = L-glutamate + NH4(+). It participates in cofactor biosynthesis; pyridoxal 5'-phosphate biosynthesis. Functionally, catalyzes the hydrolysis of glutamine to glutamate and ammonia as part of the biosynthesis of pyridoxal 5'-phosphate. The resulting ammonia molecule is channeled to the active site of PdxS. The sequence is that of Pyridoxal 5'-phosphate synthase subunit PdxT from Bacillus pumilus (strain SAFR-032).